A 209-amino-acid polypeptide reads, in one-letter code: Uracil phosphoribosyltransferase (209 aa).

Residues Arg79, Arg104, and 131–139 each bind 5-phospho-alpha-D-ribose 1-diphosphate; that span reads DPMLATGGS. Uracil-binding positions include Ile194 and 199–201; that span reads GDA. Asp200 is a 5-phospho-alpha-D-ribose 1-diphosphate binding site.

This sequence belongs to the UPRTase family. The cofactor is Mg(2+).

It carries out the reaction UMP + diphosphate = 5-phospho-alpha-D-ribose 1-diphosphate + uracil. Its pathway is pyrimidine metabolism; UMP biosynthesis via salvage pathway; UMP from uracil: step 1/1. With respect to regulation, allosterically activated by GTP. In terms of biological role, catalyzes the conversion of uracil and 5-phospho-alpha-D-ribose 1-diphosphate (PRPP) to UMP and diphosphate. In Listeria monocytogenes serovar 1/2a (strain ATCC BAA-679 / EGD-e), this protein is Uracil phosphoribosyltransferase.